The following is a 158-amino-acid chain: Ribosome maturation factor RimP (158 aa).

The protein belongs to the RimP family.

The protein localises to the cytoplasm. Its function is as follows. Required for maturation of 30S ribosomal subunits. This chain is Ribosome maturation factor RimP, found in Pseudomonas syringae pv. tomato (strain ATCC BAA-871 / DC3000).